The primary structure comprises 1020 residues: RNA-binding protein 44 (1020 aa).

Disordered stretches follow at residues 1–23 and 50–70; these read MQAT…GHLQ and DGEG…NSSV. A compositionally biased stretch (basic and acidic residues) spans 58 to 70; that stretch reads TDERTNVKENSSV. A phosphoserine mark is found at serine 249, serine 371, serine 374, serine 516, serine 683, and serine 690. The RRM domain maps to 796–870; sequence FLIHVGGLCP…KSVNVRLVKI (75 aa).

In terms of assembly, homodimer. Interacts with TEX14.

The protein resides in the cytoplasm. Component of intercellular bridges during meiosis. Intercellular bridges are evolutionarily conserved structures that connect differentiating germ cells. Not required for fertility. The protein is RNA-binding protein 44 (Rbm44) of Rattus norvegicus (Rat).